The sequence spans 151 residues: Flagellar assembly factor FliW (151 aa).

Belongs to the FliW family. As to quaternary structure, interacts with translational regulator CsrA and flagellin(s).

Its subcellular location is the cytoplasm. Functionally, acts as an anti-CsrA protein, binds CsrA and prevents it from repressing translation of its target genes, one of which is flagellin. Binds to flagellin and participates in the assembly of the flagellum. This is Flagellar assembly factor FliW from Halalkalibacterium halodurans (strain ATCC BAA-125 / DSM 18197 / FERM 7344 / JCM 9153 / C-125) (Bacillus halodurans).